Reading from the N-terminus, the 387-residue chain is Protein kinase gsk3 (387 aa).

One can recognise a Protein kinase domain in the interval 32 to 316 (YTSSKVVGSG…AAEAMCHPFF (285 aa)). Residues 38–46 (VGSGSFGVV) and Lys-61 each bind ATP. Residue Asp-157 is the Proton acceptor of the active site. At Ser-191 the chain carries Phosphoserine. Tyr-192 carries the post-translational modification Phosphotyrosine; by autocatalysis. Ser-335 carries the phosphoserine modification.

The protein belongs to the protein kinase superfamily. CMGC Ser/Thr protein kinase family. GSK-3 subfamily. Autophosphorylated on tyrosine residues.

The protein resides in the cytoplasm. Its subcellular location is the nucleus. The enzyme catalyses L-seryl-[protein] + ATP = O-phospho-L-seryl-[protein] + ADP + H(+). The catalysed reaction is L-threonyl-[protein] + ATP = O-phospho-L-threonyl-[protein] + ADP + H(+). Its function is as follows. Interacts with cdc14 which is thought to play a role in the initiation and completion of mitosis. Involved in the positive regulation of mis12. The sequence is that of Protein kinase gsk3 (gsk3) from Schizosaccharomyces pombe (strain 972 / ATCC 24843) (Fission yeast).